A 354-amino-acid chain; its full sequence is 4-hydroxy-2-oxovalerate aldolase 5 (354 aa).

The 253-residue stretch at 11–263 folds into the Pyruvate carboxyltransferase domain; the sequence is VTVHDMCLRD…ETGCDLFKLM (253 aa). 19–20 is a binding site for substrate; sequence RD. Asp-20 is a Mn(2+) binding site. The Proton acceptor role is filled by His-23. Positions 173 and 202 each coordinate substrate. Residues His-202 and His-204 each coordinate Mn(2+). Residue Tyr-293 participates in substrate binding.

Belongs to the 4-hydroxy-2-oxovalerate aldolase family.

The enzyme catalyses (S)-4-hydroxy-2-oxopentanoate = acetaldehyde + pyruvate. The polypeptide is 4-hydroxy-2-oxovalerate aldolase 5 (Dechloromonas aromatica (strain RCB)).